Here is a 530-residue protein sequence, read N- to C-terminus: Zinc finger protein ZIC 4 (530 aa).

2 stretches are compositionally biased toward basic residues: residues 31-40 (HHPHHHHHPP) and 97-113 (NPHH…HHMA). 2 disordered regions span residues 31-50 (HHPH…TGYP) and 87-138 (PGAL…SYSS). A C2H2-type 1; atypical zinc finger spans residues 284–317 (LICKWIEEDQLPKKLCSKTFSTMHELVTHVTVEH). The C2H2-type 2; atypical zinc finger occupies 326–353 (HICFWEECPREGKPFKAKYKLVNHIRVH). 3 C2H2-type zinc fingers span residues 359 to 383 (FPCP…KRTH), 389 to 413 (FKCE…SHVH), and 419 to 443 (YNCK…MKVH). Positions 432 to 530 (HPSSLRKHMK…YSNWQATNTF (99 aa)) are disordered. Residues 435-444 (SLRKHMKVHC) show a composition bias toward basic residues. 2 stretches are compositionally biased toward low complexity: residues 455–467 (SSIP…SSDS) and 474–485 (TSSQPEPPTSSQ). Polar residues predominate over residues 520–530 (SYSNWQATNTF).

This sequence belongs to the GLI C2H2-type zinc-finger protein family. In terms of tissue distribution, at mid-gastrula stage (stage 11.5), weakly expressed in the prospective neural fold. Expressed in the neural plate border region at early neurula stage (stage 15) with strongest expression in the prospective regions of the hyoid and branchial crests. Expression in the dorsal central nervous system (CNS) continues through late neurula stage and early tail bud stages with expression strongest in the olfactory placode and expression levels increasing as development progresses. Becomes expressed in somites.

The protein resides in the nucleus. Functionally, may bind to DNA. Induces neural and neural crest differentiation. Does not induce anterior neural tissue. This chain is Zinc finger protein ZIC 4 (zic4), found in Xenopus laevis (African clawed frog).